Here is a 781-residue protein sequence, read N- to C-terminus: MMKKNKPTVAQTLSPEEEQAKFFEEAKNNVMIQGHHMKLSLDNSKLMDALKYASNIINELRTSLLSPKSYYALYLVAFDYLQYLNTYLYEEKHGKKMIELYEVVQHAGNVLPRLYLLITVGSVYIKTKQAPAKDVLKDLIEMCRGVQHPTRGLFLRHYLSEVTKDKLPDIDSSVENGTVMDSIDFIIQNFTETNKLWVRMQHQAPTKDRERRENERLELRLLVGKNLSRLAQLDGVDQKTYSEVVLPKVVEQIINCKDKIAQQYLMEILIQVFPDEFHLATLDIILQTCAQLQSGVDVKTIIASLIDRLANFATRNADLVPDNIKIFDIFFNNVKEIIQARPNMELQDILGLHVSLLNLTLKCYPTNKDNANEVLGLCQSIIVNKAKEDINKPTCVKQIIQLLQIPLDVFKNVLVVLKLSNYQPLISCLSYNNRKKVSLDIVNNTINNSTIIEEPEAVNNLLETIQTLIKDEQDQPDMDDIDKEDFQEEQNKVASLIHLFDSEDPEKLFKIYIIARGHFGKGGPHRIRHTLVPLVFCSLRFIRNFKQQVDSGVISLDENKWIAIGSKIFTFVSETIKALADIKLADLSFRLYLQALQTFDHCGLVSRVKELAIKALLIFQEDIADFKAQVMALQLLISTLNSLSIPNEEIYESLAAQTIKQASRLLLPQDQAKLISTCSHLFWVDNPSRQYQNPDSVLQALKKALSIISNESSPGLGTFVDILNECLFYCDKETDAVPIQFVSDLVELIRTTHVKEADPALPYLQNTIKYIQSQNYKGISI.

It belongs to the VPS35 family. As to quaternary structure, component of a retromer subcomplex consisting of vps29, vps26 and vps35.

The protein resides in the membrane. It is found in the endosome membrane. Functionally, plays a role in vesicular protein sorting. Component of the membrane-associated retromer complex which is essential in endosome-to-Golgi retrograde transport. The vps29-vps26-vps35 subcomplex may be involved in cargo selection. The polypeptide is Vacuolar protein sorting-associated protein 35 (vps35) (Dictyostelium discoideum (Social amoeba)).